We begin with the raw amino-acid sequence, 157 residues long: Eukaryotic translation initiation factor 5A-1 (157 aa).

Residue lysine 52 is modified to Hypusine. 2 positions are modified to phosphoserine: serine 75 and serine 77. Threonine 78 carries the post-translational modification Phosphothreonine.

It belongs to the eIF-5A family. Post-translationally, lys-52 undergoes hypusination, a unique post-translational modification that consists in the addition of a butylamino group from spermidine to lysine side chain, leading to the formation of the unusual amino acid hypusine. eIF-5As are the only known proteins to undergo this modification, which is essential for their function.

The protein localises to the cytoplasm. Translation factor that promotes translation elongation and termination, particularly upon ribosome stalling at specific amino acid sequence contexts. Binds between the exit (E) and peptidyl (P) site of the ribosome and promotes rescue of stalled ribosome: specifically required for efficient translation of polyproline-containing peptides as well as other motifs that stall the ribosome. Acts as a ribosome quality control (RQC) cofactor by joining the RQC complex to facilitate peptidyl transfer during CAT tailing step. The sequence is that of Eukaryotic translation initiation factor 5A-1 (tif51a) from Schizosaccharomyces pombe (strain 972 / ATCC 24843) (Fission yeast).